The primary structure comprises 612 residues: Dihydroxy-acid dehydratase (612 aa).

Aspartate 81 is a Mg(2+) binding site. Residue cysteine 122 coordinates [2Fe-2S] cluster. 2 residues coordinate Mg(2+): aspartate 123 and lysine 124. Lysine 124 bears the N6-carboxylysine mark. [2Fe-2S] cluster is bound at residue cysteine 195. Position 491 (glutamate 491) interacts with Mg(2+). Catalysis depends on serine 517, which acts as the Proton acceptor.

It belongs to the IlvD/Edd family. In terms of assembly, homodimer. [2Fe-2S] cluster serves as cofactor. Mg(2+) is required as a cofactor.

The catalysed reaction is (2R)-2,3-dihydroxy-3-methylbutanoate = 3-methyl-2-oxobutanoate + H2O. It carries out the reaction (2R,3R)-2,3-dihydroxy-3-methylpentanoate = (S)-3-methyl-2-oxopentanoate + H2O. It participates in amino-acid biosynthesis; L-isoleucine biosynthesis; L-isoleucine from 2-oxobutanoate: step 3/4. It functions in the pathway amino-acid biosynthesis; L-valine biosynthesis; L-valine from pyruvate: step 3/4. Functions in the biosynthesis of branched-chain amino acids. Catalyzes the dehydration of (2R,3R)-2,3-dihydroxy-3-methylpentanoate (2,3-dihydroxy-3-methylvalerate) into 2-oxo-3-methylpentanoate (2-oxo-3-methylvalerate) and of (2R)-2,3-dihydroxy-3-methylbutanoate (2,3-dihydroxyisovalerate) into 2-oxo-3-methylbutanoate (2-oxoisovalerate), the penultimate precursor to L-isoleucine and L-valine, respectively. The polypeptide is Dihydroxy-acid dehydratase (Bartonella henselae (strain ATCC 49882 / DSM 28221 / CCUG 30454 / Houston 1) (Rochalimaea henselae)).